The following is a 1714-amino-acid chain: Intersectin-1 (1714 aa).

Residues E21–I109 enclose the EH 1 domain. Residues L53–K88 enclose the EF-hand 1 domain. The Ca(2+) site is built by D66, N68, D70, R72, and E77. S203 carries the phosphoserine modification. Residues S221 to R310 enclose the EH 2 domain. The 36-residue stretch at L254 to A289 folds into the EF-hand 2 domain. Positions 267, 269, 271, 273, and 278 each coordinate Ca(2+). The segment covering R310 to V325 has biased composition (low complexity). 2 disordered regions span residues R310–N356 and S614–L706. Phosphoserine occurs at positions 318, 334, and 335. A KLERQ region spans residues D326–K702. 2 stretches are compositionally biased toward basic and acidic residues: residues Q340–N356 and R622–L706. Residues R354–Q658 adopt a coiled-coil conformation. At S685 the chain carries Phosphoserine. The SH3 1 domain occupies V738–E799. The segment at A827–W863 is disordered. Positions V831–N855 are enriched in polar residues. At T890 the chain carries Phosphothreonine. Phosphoserine occurs at positions 894, 895, and 897. In terms of domain architecture, SH3 2 spans V906–G964. A Phosphoserine modification is found at S971. T977 carries the phosphothreonine modification. A phosphoserine mark is found at S979 and S988. SH3 domains follow at residues I995–S1053 and K1067–P1131. The required for interaction with FCHSD2 stretch occupies residues K1067–P1131. The Bipartite nuclear localization signal; in isoform 2 motif lies at R1097–W1120. S1130 bears the Phosphoserine mark. A Phosphothreonine modification is found at T1137. The 60-residue stretch at P1148–D1207 folds into the SH3 5 domain. The DH domain maps to K1230 to G1416. The 110-residue stretch at K1455–E1564 folds into the PH domain. The region spanning K1572–V1688 is the C2 domain. The residue at position 1638 (S1638) is a Phosphoserine. Ca(2+)-binding residues include D1660, S1663, and D1666.

In terms of assembly, interacts (via DH domain) with CDC42. Interacts (via SH3 domain 1) with WASL. Interacts with dynamin, SNAP25 and SNAP23. Interacts with clathrin-associated proteins and other components of the endocytic machinery, such as SPIN90, EPS15, EPN1, EPN2, STON2, FCHO1, FCHO2 and DAB2. Interacts (via SH3 domains) with REPS1 and SGIP1. Interacts with ARHGAP31. Interacts with ADAM15. Interacts with PRRT2. Interacts (via SH3 domain 4) with FCHSD2 (via SH3 domain 2). Interacts (via SH3 domain 1) with DENND2B. Interacts (via SH3 domains) with CBL. Isoform 2: Interacts with CBL and DNM1. Isoform 2: Interacts with LMNA. Isoform 2: Interacts with importin subunit KPNA1; this is likely to mediate its import into the nucleus. Interacts with DNM2. Requires Ca(2+) as cofactor. As to expression, detected in brain, adrenal gland and heart. Detected in neurons at the calyx of Held (at protein level). Isoform 1: Primarily detected in brain neurons. Isoform 2: Primarily detected in glia (at protein level). Widely expressed. Expressed at high levels in brain, heart and skeletal muscle.

Its subcellular location is the endomembrane system. It is found in the synapse. The protein localises to the synaptosome. It localises to the cell projection. The protein resides in the lamellipodium. Its subcellular location is the cell membrane. It is found in the membrane. The protein localises to the clathrin-coated pit. It localises to the recycling endosome. The protein resides in the endosome. Its subcellular location is the cytoplasmic vesicle. It is found in the cytoplasm. The protein localises to the nucleus envelope. Functionally, adapter protein that provides a link between the endocytic membrane traffic and the actin assembly machinery. Acts as a guanine nucleotide exchange factor (GEF) for CDC42, and thereby stimulates actin nucleation mediated by WASL and the ARP2/3 complex. Plays a role in the assembly and maturation of clathrin-coated vesicles. Recruits FCHSD2 to clathrin-coated pits. Involved in endocytosis of activated EGFR, and probably also other growth factor receptors. Involved in endocytosis of integrin beta-1 (ITGB1) and transferrin receptor (TFR); internalization of ITGB1 as DAB2-dependent cargo but not TFR may involve association with DAB2. Promotes ubiquitination and subsequent degradation of EGFR, and thereby contributes to the down-regulation of EGFR-dependent signaling pathways. In chromaffin cells, required for normal exocytosis of catecholamines. Required for rapid replenishment of release-ready synaptic vesicles at presynaptic active zones. Inhibits ARHGAP31 activity toward RAC1. Plays a role in synaptic vesicle endocytosis in brain neurons. In Mus musculus (Mouse), this protein is Intersectin-1.